We begin with the raw amino-acid sequence, 275 residues long: Voltage-dependent calcium channel gamma-5 subunit (275 aa).

Transmembrane regions (helical) follow at residues 8 to 28, 103 to 123, 129 to 149, and 181 to 201; these read ALTLLSSVFAVCGLGLLGIAV, FPLVSLFFMFIGFILSNIGHI, ILAFVSGIFFILSGLSLVVGL, and FAAISFLLTESAGVMSVYLFM.

Belongs to the PMP-22/EMP/MP20 family. CACNG subfamily. In terms of assembly, the L-type calcium channel is composed of five subunits: alpha-1, alpha-2/delta, beta and gamma. Acts as an auxiliary subunit for AMPA-selective glutamate receptors (AMPARs). Found in a complex with GRIA1, GRIA2, GRIA3, GRIA4, CNIH2, CNIH3, CACNG2, CACNG3, CACNG4, CACNG7 and CACNG8. Interacts with GRIA1, GRIA2, GRIA3 and GRIA4.

The protein resides in the membrane. Its subcellular location is the postsynaptic density membrane. Regulates the gating properties of AMPA-selective glutamate receptors (AMPARs). Modulates their gating properties by accelerating their rates of activation, deactivation and desensitization. Displays subunit-specific AMPA receptor regulation. Shows specificity for GRIA1, GRIA4 and the long isoform of GRIA2. According to PubMed:18817736, shows only specificity for GRIA2 and specifically to the form of GRIA2 for which a single amino acid in the pore region has been edited from a glutamine to an arginine residue. Thought to stabilize the calcium channel in an inactivated (closed) state. The protein is Voltage-dependent calcium channel gamma-5 subunit (Cacng5) of Rattus norvegicus (Rat).